A 143-amino-acid chain; its full sequence is UPF0651 protein P31B10.02, mitochondrial (143 aa).

Positions 48–93 constitute an Oxidoreductase-like domain; it reads IYDGIRVPPKPEEPLNCCQSGCAICVWDVYADDLEEYNRARRKAKR.

This sequence belongs to the UPF0651 family.

The protein resides in the mitochondrion. The sequence is that of UPF0651 protein P31B10.02, mitochondrial from Schizosaccharomyces pombe (strain 972 / ATCC 24843) (Fission yeast).